Consider the following 506-residue polypeptide: MTVQNVRVRVAPSPTGDPHVGTAYMALFNEVFARKYNGQMILRIEDTDQTRSRDDYEANIFSALKWCGIRWDEGPDVGGAYGPYRQSERTEIYKKYAEILLQTDCAYKCFATPQELQEMRAVASTLGYRGGYDRRYRYLSPEEVRQREEQGQPYTIRLKVPLTGESVFEDQCKGCVVFPWADVDDQVLVKSDGFPTYHFANVVDDHLMGITHVLRGEEWLSSTPKHLLLYEAFGWEPPQFFHMPLLLNPDGSKLSKRKNPTSIFYYRDAGYKKEAFMNFLTLMGYSMEGDEEIYSMQRLIEAFDPKRIGRSGAVFDIRKLDWMNKHYLNHEGSPESLLQELKGWLWNDEFLLKILPLCQSRITTLADFVGLTSFFFTAIPQYSKEELLPSSLKQEQAAVMLYSLVKYLEKKDLWEKDFFYQGSKWLAEAFQVHHKKAVIPLLYVAITGAKQGLPLFDSMELLGKARTRARLTYAQNLLGGVSKKVQQQVDKALQDQPLEDIRFLDF.

Positions P12–T22 match the 'HIGH' region motif. Residues K253–R257 carry the 'KMSKS' region motif. K256 is an ATP binding site.

This sequence belongs to the class-I aminoacyl-tRNA synthetase family. Glutamate--tRNA ligase type 1 subfamily. In terms of assembly, monomer.

Its subcellular location is the cytoplasm. It catalyses the reaction tRNA(Glu) + L-glutamate + ATP = L-glutamyl-tRNA(Glu) + AMP + diphosphate. Functionally, catalyzes the attachment of glutamate to tRNA(Glu) in a two-step reaction: glutamate is first activated by ATP to form Glu-AMP and then transferred to the acceptor end of tRNA(Glu). The sequence is that of Glutamate--tRNA ligase from Chlamydia trachomatis serovar A (strain ATCC VR-571B / DSM 19440 / HAR-13).